Reading from the N-terminus, the 859-residue chain is Probable potassium transporter 14 (859 aa).

Residues 1–19 (METRSGGSGSASGGGGGGR) are compositionally biased toward gly residues. Positions 1–69 (METRSGGSGS…SRGGCSDSDD (69 aa)) are disordered. Topologically, residues 1 to 112 (METRSGGSGS…RHQEITVGRS (112 aa)) are cytoplasmic. The segment covering 54–65 (PAAASGSRGGCS) has biased composition (low complexity). Residues 113-133 (IVLAVQTLGVVFGDVGTSPLY) form a helical membrane-spanning segment. Over 134–155 (AFDVMFNKYPITSKEDVLGALS) the chain is Extracellular. The chain crosses the membrane as a helical span at residues 156–176 (LVIYTLILIPLLKYTLIALWG). Topologically, residues 177–240 (NDDGEGGTFA…RLETSSMLKK (64 aa)) are cytoplasmic. A helical transmembrane segment spans residues 241 to 261 (LLLMLVLFGTSMVIADGVVTP). Residues 262-275 (AMSVMSAVNGLKVG) are Extracellular-facing. A helical membrane pass occupies residues 276–296 (ISSVNEGEVVMITVAVLIVLF). The Cytoplasmic portion of the chain corresponds to 297–305 (TLQRFGSSK). Residues 306–326 (VALAVGPALFIWFCCLAGIGI) traverse the membrane as a helical segment. Residues 327-359 (YNMKTYGSAVLQAFNPMYIYYYFERNPTQAWMS) lie on the Extracellular side of the membrane. The helical transmembrane segment at 360–380 (LGGCLLCATGSEAMFADLCYF) threads the bilayer. Topologically, residues 381–388 (SVKSVQLT) are cytoplasmic. The helical transmembrane segment at 389-409 (FVFLVLPCLLLGYLGQAAFLM) threads the bilayer. Residues 410-417 (ENLTENQQ) lie on the Extracellular side of the membrane. The N-linked (GlcNAc...) asparagine glycan is linked to asparagine 411. Residues 418-438 (VFFLSIPNQAFWPVVFIAILA) form a helical membrane-spanning segment. Residues 439-478 (AIIASRTMTTAIFSTIKQATALGCFPRLKIIHTSRSFMGQ) are Cytoplasmic-facing. A helical membrane pass occupies residues 479 to 499 (IYIPMMNWFLLVSCLAFVTMF). Residues 500–508 (GSINEIGNA) lie on the Extracellular side of the membrane. The helical transmembrane segment at 509-531 (YGIAELGVMMMTTVLVTIIMLLI) threads the bilayer. Topologically, residues 532–535 (WQIN) are cytoplasmic. The helical transmembrane segment at 536–558 (IIVVLCFLTLSLGLELIFFSSVL) threads the bilayer. At 559–560 (GS) the chain is on the extracellular side. Residues 561-581 (VADGSWVLLVFAAVLYLIMYI) form a helical membrane-spanning segment. Over 582-859 (WNYGTKLKYE…MMQVAMQYMV (278 aa)) the chain is Cytoplasmic. The disordered stretch occupies residues 752–772 (GVPPAEAAGTTEHPTIGSSMS). The span at 763-772 (EHPTIGSSMS) shows a compositional bias: polar residues.

The protein belongs to the HAK/KUP transporter (TC 2.A.72.3) family.

The protein resides in the membrane. In terms of biological role, high-affinity potassium transporter. In Oryza sativa subsp. japonica (Rice), this protein is Probable potassium transporter 14 (HAK14).